The sequence spans 275 residues: Lacto-N-neotetraose biosynthesis glycosyltransferase LgtB (275 aa).

Belongs to the glycosyltransferase 25 family.

It participates in glycan metabolism; lacto-N-neotetraose biosynthesis. The protein operates within bacterial outer membrane biogenesis; lipooligosaccharide biosynthesis. Functionally, adds the second galactose to the lacto-N-tetraose chain in lipooligosaccharide (LOS). This is Lacto-N-neotetraose biosynthesis glycosyltransferase LgtB (lgtB) from Neisseria meningitidis serogroup B (strain ATCC BAA-335 / MC58).